The sequence spans 481 residues: Betaine aldehyde dehydrogenase 2 (481 aa).

Residues Ser-29 and Asp-96 each coordinate K(+). 152–154 (GAW) is a binding site for NAD(+). The active-site Charge relay system is the Lys-164. NAD(+) is bound at residue 178–181 (KPSE). Val-182 is a K(+) binding site. 231–234 (SVKT) lines the NAD(+) pocket. Ile-246 is a K(+) binding site. Glu-252 (proton acceptor) is an active-site residue. Positions 254, 286, and 383 each coordinate NAD(+). The Nucleophile role is filled by Cys-286. Cys-286 bears the Cysteine sulfenic acid (-SOH) mark. Residues Lys-453 and Gly-456 each coordinate K(+). The active-site Charge relay system is Glu-460.

Belongs to the aldehyde dehydrogenase family. In terms of assembly, dimer of dimers. K(+) is required as a cofactor.

It carries out the reaction betaine aldehyde + NAD(+) + H2O = glycine betaine + NADH + 2 H(+). Its pathway is amine and polyamine biosynthesis; betaine biosynthesis via choline pathway; betaine from betaine aldehyde: step 1/1. In terms of biological role, involved in the biosynthesis of the osmoprotectant glycine betaine. Catalyzes the irreversible oxidation of betaine aldehyde to the corresponding acid. This Rhizobium meliloti (strain 1021) (Ensifer meliloti) protein is Betaine aldehyde dehydrogenase 2.